The sequence spans 1642 residues: Cobra venom factor (1642 aa).

The first 22 residues, 1–22, serve as a signal peptide directing secretion; sequence MERMALYLVAALLIGFPGSSHG. N-linked (GlcNAc...) asparagine glycosylation is found at N153, N158, and N209. Mg(2+) contacts are provided by P516, D539, V540, and D542. Disulfide bonds link C544/C801, C609/C644, C677/C704, C678/C711, C691/C712, C857/C1492, C1340/C1468, C1368/C1437, C1485/C1490, C1497/C1569, C1516/C1640, and C1616/C1625. A propeptide spanning residues 650–732 is cleaved from the precursor; sequence RRRRSSVLLL…QRESELFLAR (83 aa). Residues 654–732 are C3a-like domain; sequence SSVLLLDSNA…QRESELFLAR (79 aa). The Anaphylatoxin-like domain occupies 677–712; it reads CCEDVMHENPMGYTCEKRAKYIQEGDACKAAFLECC. Residues 736 to 747 are factor B binding site; that stretch reads EDGFIADSDIIS. Positions 985–1263 are excised as a propeptide; that stretch reads HLIITPSGCG…VMAFQALAEY (279 aa). The interval 985–1263 is C3d-like domain; the sequence is HLIITPSGCG…VMAFQALAEY (279 aa). A cross-link (isoglutamyl cysteine thioester (Cys-Gln)) is located at residues 993–996; the sequence is CGEQ. The factor H binding site stretch occupies residues 1190–1253; that stretch reads VLMAASTGRD…GETYGQTQAT (64 aa). N1346 carries N-linked (GlcNAc...) asparagine glycosylation. The 144-residue stretch at 1497 to 1640 folds into the NTR domain; sequence CSSLNHQERI…FSYTLTEFGC (144 aa).

This sequence belongs to the venom complement C3 homolog family. In terms of assembly, heterotrimer of alpha, beta and gamma chains; disulfide-linked. Is active with factor B in the presence of factor D. First processed by the removal of 4 Arg residues by furin-type protease, forming two chains, alpha and gamma/beta precursor, linked by a disulfide bond. Probably, the cobrin cleaves the C3a-like domain and then the C3d-like domain, generating the mature cobra venom factor (CVF). This mature CVF is composed of three chains: alpha, gamma and beta. Post-translationally, contains 3 N-linked oligosaccharide chains, two in the alpha-chain and one in the beta-chain. Glycosylation is not required for the biological activity. However, it contributes to the immunogenicity of CVF. The carbohydrate content is 7.4. The major oligosaccharide is a symmetric fucosylated biantennary complex-type chain with an unusual alpha-galactosylated Le(x) structure at its non-reducing end. In terms of tissue distribution, expressed by the venom gland.

It is found in the secreted. Its function is as follows. Complement-activating protein in cobra venom. It is a structural and functional analog of complement component C3b, the activated form of C3. It binds factor B (CFB), which is subsequently cleaved by factor D (CFD) to form the bimolecular complex CVF/Bb. CVF/Bb is a C3/C5 convertase that cleaves both complement components C3 and C5. Structurally, it resembles the C3b degradation product C3c, which is not able to form a C3/C5 convertase. Unlike C3b/Bb, CVF/Bb is a stable complex and completely resistant to the actions of complement regulatory factors H (CFH) and I (CFI). Therefore, CVF continuously activates complement resulting in the depletion of complement activity. The sequence is that of Cobra venom factor from Naja kaouthia (Monocled cobra).